The following is a 328-amino-acid chain: MEKKHVTVQIQSAPPSYIKLEANEKFVYITSTMNGLSYQIAAIVSYPEKRNSSTANKEDGKLLCKENKLALLLHGSQSHKNAIYQTLLAKRLAEFGYWVLRIDFRGQGDSSDNCDPGLGRTLAQDLEDLSTVYQTVSDRSLRVQLYKTSTISLDVVVAHSRGSLAMFKFCLKLHAAESPLPSHLINCAGRYDGRGLIERCTRLHPHWQAEGGFWANGPRNGEYKDFWIPLSETYSIAGVCVPEFATIPQTCSVMSCYGMCDHIVPISAASNYARLFEGRHSLKLIENADHNYYGIEGDPNALGLPIRRGRVNYSPLVVDLIMEYLQDT.

This is an uncharacterized protein from Saccharomyces cerevisiae (strain ATCC 204508 / S288c) (Baker's yeast).